Here is a 437-residue protein sequence, read N- to C-terminus: Protein WVD2-like 5 (437 aa).

Disordered stretches follow at residues 1 to 22 (MDPESIMAADGTDSAPANGGLA), 38 to 210 (TVDT…FSFK), and 254 to 437 (LRKS…AVEH). Residues 41-55 (TTSESQNENSANSST) are compositionally biased toward low complexity. Basic and acidic residues predominate over residues 58-86 (TIEHVKEAAEGTQVEHVDDSKCMKGEKAQ). Residues 121-140 (SNGSVAPNVQTTNPLKSKSF) show a composition bias toward polar residues. Basic and acidic residues predominate over residues 151–167 (GKHDSAPAESADGEKVK). The residue at position 208 (S208) is a Phosphoserine. Positions 288-297 (KSPKLGRKKT) are enriched in basic residues. Residues 360–371 (PAPAKAAIIPAK) show a composition bias toward low complexity. Positions 408-437 (EDSHETVSPRMNEDRADKSIEVSEAVAVEH) are enriched in basic and acidic residues. The residue at position 415 (S415) is a Phosphoserine.

This sequence belongs to the TPX2 family. Expressed in seedlings.

Its subcellular location is the cytoplasm. It localises to the cytoskeleton. Microtubule-associated protein (MAP) that regulates the orientation of interphase cortical microtubules. In Arabidopsis thaliana (Mouse-ear cress), this protein is Protein WVD2-like 5.